Reading from the N-terminus, the 227-residue chain is PKHD-type hydroxylase Caul_0045 (227 aa).

A Fe2OG dioxygenase domain is found at 78-178 (TILSPLFNRY…RTASFFWIQS (101 aa)). Fe cation is bound by residues H96, D98, and H159. 2-oxoglutarate is bound at residue R169.

Fe(2+) serves as cofactor. Requires L-ascorbate as cofactor.

In Caulobacter sp. (strain K31), this protein is PKHD-type hydroxylase Caul_0045.